A 172-amino-acid chain; its full sequence is Small acidic protein (172 aa).

Positions 1 to 10 (MSSARDSQAQ) are enriched in polar residues. The tract at residues 1-172 (MSSARDSQAQ…KMMFVKASGS (172 aa)) is disordered. The span at 46-76 (GKKEHTGRLVIGDHRSTSHFRTGEEDKKMNE) shows a compositional bias: basic and acidic residues. Over residues 80 to 92 (SQYQQSMDSTMSG) the composition is skewed to polar residues. Residues 112 to 122 (AAGHSSDHESS) are compositionally biased toward basic and acidic residues. Over residues 123-138 (EDSESGSDSEQDESAE) the composition is skewed to acidic residues. Residues 142-160 (AAEKHDEAAVPENKKEAKS) are compositionally biased toward basic and acidic residues.

Belongs to the SMAP family. As to expression, expressed in otocyst.

In Coturnix japonica (Japanese quail), this protein is Small acidic protein (SMAP).